The sequence spans 1024 residues: Error-prone DNA polymerase (1024 aa).

The protein belongs to the DNA polymerase type-C family. DnaE2 subfamily.

The protein resides in the cytoplasm. The catalysed reaction is DNA(n) + a 2'-deoxyribonucleoside 5'-triphosphate = DNA(n+1) + diphosphate. DNA polymerase involved in damage-induced mutagenesis and translesion synthesis (TLS). It is not the major replicative DNA polymerase. In Vibrio vulnificus (strain YJ016), this protein is Error-prone DNA polymerase.